The sequence spans 411 residues: LL-diaminopimelate aminotransferase (411 aa).

2 residues coordinate substrate: tyrosine 15 and glycine 42. Pyridoxal 5'-phosphate-binding positions include tyrosine 72, 108 to 109 (SK), tyrosine 132, asparagine 187, tyrosine 218, and 246 to 248 (SFS). Lysine 109, tyrosine 132, and asparagine 187 together coordinate substrate. Lysine 249 carries the N6-(pyridoxal phosphate)lysine modification. Positions 257 and 292 each coordinate pyridoxal 5'-phosphate. Residues asparagine 292 and arginine 388 each contribute to the substrate site.

Belongs to the class-I pyridoxal-phosphate-dependent aminotransferase family. LL-diaminopimelate aminotransferase subfamily. Homodimer. Pyridoxal 5'-phosphate serves as cofactor.

The enzyme catalyses (2S,6S)-2,6-diaminopimelate + 2-oxoglutarate = (S)-2,3,4,5-tetrahydrodipicolinate + L-glutamate + H2O + H(+). It functions in the pathway amino-acid biosynthesis; L-lysine biosynthesis via DAP pathway; LL-2,6-diaminopimelate from (S)-tetrahydrodipicolinate (aminotransferase route): step 1/1. Involved in the synthesis of meso-diaminopimelate (m-DAP or DL-DAP), required for both lysine and peptidoglycan biosynthesis. Catalyzes the direct conversion of tetrahydrodipicolinate to LL-diaminopimelate. This is LL-diaminopimelate aminotransferase from Citrifermentans bemidjiense (strain ATCC BAA-1014 / DSM 16622 / JCM 12645 / Bem) (Geobacter bemidjiensis).